A 1717-amino-acid chain; its full sequence is DNA-directed RNA polymerase I subunit RPA1 (1717 aa).

6 residues coordinate Zn(2+): cysteine 64, cysteine 67, cysteine 74, histidine 77, cysteine 104, and cysteine 107. The clamp stretch occupies residues 110–201 (LTCPRAAIYL…VAQFWKTHMA (92 aa)). 2 residues coordinate Zn(2+): cysteine 205 and cysteine 208. The clamp stretch occupies residues 327-433 (FTNGQTVNLQ…IRQILEKKEG (107 aa)). Positions 410–423 (DSEMDKLMLEKYPG) are rudder. Residues lysine 431, arginine 436, and arginine 443 each contribute to the DNA site. The interval 475–549 (YPQPVTPWNV…QGTKVVCRHV (75 aa)) is involved in RRN3 binding to Pol I complex. Position 559 (arginine 559) interacts with RNA. Mg(2+) is bound by residues aspartate 595, aspartate 597, and aspartate 599. Aspartate 599 lines the RNA pocket. The tract at residues 812–890 (KPNADVVRQR…NEINKACMPL (79 aa)) is funnel. Positions 967 to 1008 (RPPEFFFHCMAGREGLVDTAVKTSRSGYLQRCIIKHLEGLVI) are bridging helix. Residues 1067–1162 (ADPQKVLGHI…SLSVWRPDIY (96 aa)) form a mediates the interaction with TOP2A region. A trigger loop region spans residues 1214 to 1255 (PGEAVGLLAAQSIGEPSTQMTLNTFHFAGRGEMNVTLGIPRL). Arginine 1256 contacts DNA. The disordered stretch occupies residues 1372–1493 (RNVNSRRATQ…RRHSRPQGAE (122 aa)). Positions 1380–1397 (TQKDLNDTEDSGRSQREE) are enriched in basic and acidic residues. Serine 1393 is subject to Phosphoserine. Composition is skewed to acidic residues over residues 1398–1419 (ERDE…DADA) and 1429–1450 (EEEV…EVQE). The segment covering 1452 to 1464 (GNIKGDGVHQGHE) has biased composition (basic and acidic residues). The segment covering 1465–1477 (PDEEEHLGLEEEE) has biased composition (acidic residues).

Belongs to the RNA polymerase beta' chain family. In terms of assembly, component of the RNA polymerase I (Pol I) complex consisting of 13 subunits: a ten-subunit catalytic core composed of POLR1A/RPA1, POLR1B/RPA2, POLR1C/RPAC1, POLR1D/RPAC2, POLR1H/RPA12, POLR2E/RPABC1, POLR2F/RPABC2, POLR2H/RPABC3, POLR2K/RPABC4 and POLR2L/RPABC5; a mobile stalk subunit POLR1F/RPA43 protruding from the core and additional subunits homologous to general transcription factors POLR1E/RPA49 and POLR1G/RPA34. Part of Pol I pre-initiation complex (PIC), in which Pol I core assembles with RRN3 and promoter-bound UTBF and SL1/TIF-IB complex. Interacts (via dock II domain) with TOP2A; this interaction may assist Pol I transcription initiation by releasing supercoils occurring during DNA unwinding. Interacts with CAVIN1; this interaction induces the dissociation of Pol I complex paused at rDNA terminator sequences. Interacts with MYO1C. Interacts with ERBB2. Interacts with DDX11. Interacts with RECQL5. It depends on Mg(2+) as a cofactor. Post-translationally, phosphorylated.

Its subcellular location is the nucleus. It localises to the nucleolus. The protein localises to the chromosome. The enzyme catalyses RNA(n) + a ribonucleoside 5'-triphosphate = RNA(n+1) + diphosphate. Its function is as follows. Catalytic core component of RNA polymerase I (Pol I), a DNA-dependent RNA polymerase which synthesizes ribosomal RNA precursors using the four ribonucleoside triphosphates as substrates. Transcribes 47S pre-rRNAs from multicopy rRNA gene clusters, giving rise to 5.8S, 18S and 28S ribosomal RNAs. Pol I-mediated transcription cycle proceeds through transcription initiation, transcription elongation and transcription termination stages. During transcription initiation, Pol I pre-initiation complex (PIC) is recruited by the selectivity factor 1 (SL1/TIF-IB) complex bound to the core promoter that precedes an rDNA repeat unit. The PIC assembly bends the promoter favoring the formation of the transcription bubble and promoter escape. Once the polymerase has escaped from the promoter it enters the elongation phase during which RNA is actively polymerized, based on complementarity with the template DNA strand. Highly processive, assembles in structures referred to as 'Miller trees' where many elongating Pol I complexes queue and transcribe the same rDNA coding regions. At terminator sequences downstream of the rDNA gene, PTRF interacts with Pol I and halts Pol I transcription leading to the release of the RNA transcript and polymerase from the DNA. Forms Pol I active center together with the second largest subunit POLR1B/RPA2. Appends one nucleotide at a time to the 3' end of the nascent RNA, with POLR1A/RPA1 contributing a Mg(2+)-coordinating DxDGD motif, and POLR1B/RPA2 participating in the coordination of a second Mg(2+) ion and providing lysine residues believed to facilitate Watson-Crick base pairing between the incoming nucleotide and the template base. Typically, Mg(2+) ions direct a 5' nucleoside triphosphate to form a phosphodiester bond with the 3' hydroxyl of the preceding nucleotide of the nascent RNA, with the elimination of pyrophosphate. Has proofreading activity: Pauses and backtracks to allow the cleavage of a missincorporated nucleotide via POLR1H/RPA12. High Pol I processivity is associated with decreased transcription fidelity. This is DNA-directed RNA polymerase I subunit RPA1 from Mus musculus (Mouse).